Consider the following 178-residue polypeptide: GTP-dependent dephospho-CoA kinase (178 aa).

Aspartate 48, isoleucine 49, aspartate 67, lysine 69, and glutamate 126 together coordinate GTP.

It belongs to the GTP-dependent DPCK family.

It catalyses the reaction 3'-dephospho-CoA + GTP = GDP + CoA + H(+). It functions in the pathway cofactor biosynthesis; coenzyme A biosynthesis. Its function is as follows. Catalyzes the GTP-dependent phosphorylation of the 3'-hydroxyl group of dephosphocoenzyme A to form coenzyme A (CoA). This is GTP-dependent dephospho-CoA kinase from Methanothrix thermoacetophila (strain DSM 6194 / JCM 14653 / NBRC 101360 / PT) (Methanosaeta thermophila).